Here is a 401-residue protein sequence, read N- to C-terminus: Exodeoxyribonuclease 7 large subunit (401 aa).

Belongs to the XseA family. Heterooligomer composed of large and small subunits.

It localises to the cytoplasm. The catalysed reaction is Exonucleolytic cleavage in either 5'- to 3'- or 3'- to 5'-direction to yield nucleoside 5'-phosphates.. Its function is as follows. Bidirectionally degrades single-stranded DNA into large acid-insoluble oligonucleotides, which are then degraded further into small acid-soluble oligonucleotides. This is Exodeoxyribonuclease 7 large subunit from Clostridioides difficile (strain 630) (Peptoclostridium difficile).